The primary structure comprises 208 residues: Elongation factor Ts, chloroplastic (208 aa).

It belongs to the EF-Ts family.

It localises to the plastid. The protein resides in the chloroplast. Associates with the EF-Tu.GDP complex and induces the exchange of GDP to GTP. It remains bound to the aminoacyl-tRNA.EF-Tu.GTP complex up to the GTP hydrolysis stage on the ribosome. This chain is Elongation factor Ts, chloroplastic (tsf), found in Cyanidium caldarium (Red alga).